We begin with the raw amino-acid sequence, 677 residues long: MLFLKNIGVFFMIFLVSKSYATDCNKITNEEECHKSSECIVINYTPCCGEQKWACSKGTFDTCTYENSCYRNSSNNQVVEVSNKCFNLDGFIKITTPTEYSCSDAKIKECALLGKSCSFQKNSCSNPTSCCPGESICEGLSSGSSTSGGGSSGGTSGGSSSGGTSGGSSSGGTSGSSSSGSSSGGVSSCSTTHCPEGYHCSMVNDVATCLASTTGGTGLPGTSSSTAGVSSCLTTLCPIGHICVEDSNGVNCVPNGGGTSGGSSSTGTSGGHPDPCRDVDCPDGFHCECKDGKTAKCVPSPTTGSSSTSGGHPDPCKDVTCPDGFHCECKDGKTAKCVPSPTTGSSSTSGGNTNPCSNVNCPDGFYCECKDGKTAKCVPSGPTQPPKPPVCSLRCPPNHECRFNDQGHQCCVKVHHDRCSLRCPHGHECKVDHNGKECCVRSHRPPPPEVCSLRCPPKHECKFDDHGKKCCVKIHCDEVCDLDCGRGFECKIRHDGSKCCVRSERPHPPQHEKCNKRCPPGHECKVDQHGKECCVVAHRPPPKCSLRCPPRHECRVNHFGEECCVKVHHDKCSLRCPPGHECKVDQHGKECCVVAHRPPPKCSLRCPPKHECRINHFGEECCVKSRNDCLTCEDLNCERKGLHCAMKTVPIDKENCCEKVPVCYSTNPLLDGGHGFI.

A signal peptide spans M1–A21. The region spanning T22–S142 is the DSCP-N domain. A glycan (N-linked (GlcNAc...) asparagine) is linked at N72. Gly residues predominate over residues G148 to S174. The disordered stretch occupies residues G148–G184. Residues G175–G184 are compositionally biased toward low complexity. Follistatin-like domains lie at S188–L210, S231–V253, P275–V298, P315–V338, P355–V378, R418–V440, V479–V501, N515–V535, and K571–V593.

Disulfide bonding is important for associating SP87 with the coat. Post-translationally, phosphorylated on serine residues.

The protein resides in the cytoplasmic vesicle. The protein localises to the secretory vesicle. It localises to the spore coat. Its function is as follows. May contribute to the structure of the coat at the interface between the middle, cellulosic layer and the outer, electron-dense, proteinaceous layer. The polypeptide is Spore coat protein SP87 (pspD) (Dictyostelium discoideum (Social amoeba)).